Consider the following 336-residue polypeptide: Terephthalate 1,2-dioxygenase, reductase component 1 (336 aa).

Residues 3 to 91 enclose the 2Fe-2S ferredoxin-type domain; the sequence is HQIHIHDSDI…DIRIQPSSFR (89 aa). Residues Cys-37, Cys-42, Cys-45, and Cys-75 each contribute to the [2Fe-2S] cluster site. Residues 98-197 form the FAD-binding FR-type domain; sequence RKRFTAKVYS…ELPFGSIALK (100 aa).

Monomer. Part of a multicomponent enzyme system composed of a reductase (TphA1I or TphA1II) and a two-subunit oxygenase component (TphA2I or TphA2II and TphA3I or TphA3II). FAD is required as a cofactor. It depends on [2Fe-2S] cluster as a cofactor.

It carries out the reaction terephthalate + NADH + O2 + H(+) = (3S,4R)-3,4-dihydroxycyclohexa-1,5-diene-1,4-dicarboxylate + NAD(+). Its function is as follows. Component of the terephthalate 1,2-dioxygenase multicomponent enzyme system which catalyzes the dioxygenation of terephthalate (TER/TPA) to 1,2-dihydroxy-3,5-cyclohexadiene-1,4-dicarboxylic acid (DCD). TphA1 probably reduces TphA2A3. It can also use 2,5-dicarboxypyridine (PDC) and 1,4-napthalenedicarboxylic acid (NDC) as substrates, and preferentially uses NADPH which is the physiological electron donor. This Comamonas sp protein is Terephthalate 1,2-dioxygenase, reductase component 1 (tphA1I).